A 121-amino-acid polypeptide reads, in one-letter code: Met-lysine-1b (121 aa).

The first 22 residues, 1 to 22 (MKSFVFALALIVAFACISESKS), serve as a signal peptide directing secretion. A propeptide spanning residues 23–69 (DHTGYEEEENLEDSELTDLVAAALLEELAEASEMDDLSYTEEAGGER) is cleaved from the precursor. Methionine 120 is modified (methionine amide).

As to expression, expressed by the venom gland.

It localises to the secreted. Its function is as follows. Shows no antimicrobial activity against Gram-positive bacterium B.subtilis B-501 or Gram-negative bacterium E.coli DH5-alpha at concentrations up to 20 ug/ml. Shows no toxicity towards insect (S.carnaria) larvae. This chain is Met-lysine-1b, found in Lachesana tarabaevi (Spider).